The sequence spans 597 residues: Arginine--tRNA ligase (597 aa).

The short motif at 138 to 148 (ANPTGPMHVGH) is the 'HIGH' region element.

The protein belongs to the class-I aminoacyl-tRNA synthetase family. As to quaternary structure, monomer.

It localises to the cytoplasm. It catalyses the reaction tRNA(Arg) + L-arginine + ATP = L-arginyl-tRNA(Arg) + AMP + diphosphate. In Rhodopseudomonas palustris (strain HaA2), this protein is Arginine--tRNA ligase.